The primary structure comprises 189 residues: Cytidylate kinase (189 aa).

An ATP-binding site is contributed by 7-15 (GPPGSGKTS).

This sequence belongs to the cytidylate kinase family. Type 2 subfamily.

It localises to the cytoplasm. It carries out the reaction CMP + ATP = CDP + ADP. The catalysed reaction is dCMP + ATP = dCDP + ADP. The chain is Cytidylate kinase from Saccharolobus islandicus (strain Y.N.15.51 / Yellowstone #2) (Sulfolobus islandicus).